The following is a 294-amino-acid chain: 33 kDa chaperonin (294 aa).

Cystine bridges form between cysteine 238–cysteine 240 and cysteine 271–cysteine 274.

It belongs to the HSP33 family. Post-translationally, under oxidizing conditions two disulfide bonds are formed involving the reactive cysteines. Under reducing conditions zinc is bound to the reactive cysteines and the protein is inactive.

The protein resides in the cytoplasm. Functionally, redox regulated molecular chaperone. Protects both thermally unfolding and oxidatively damaged proteins from irreversible aggregation. Plays an important role in the bacterial defense system toward oxidative stress. This Thermoanaerobacter pseudethanolicus (strain ATCC 33223 / 39E) (Clostridium thermohydrosulfuricum) protein is 33 kDa chaperonin.